Reading from the N-terminus, the 365-residue chain is Patr class I histocompatibility antigen, A-126 alpha chain (365 aa).

A signal peptide spans 1 to 24 (MAVMAPRTLVLLLSGALALTQTWA). The segment at 25 to 114 (GSHSMRYFST…LRGYYNQSED (90 aa)) is alpha-1. The Extracellular segment spans residues 25-308 (GSHSMRYFST…EPSSQPTIPI (284 aa)). The N-linked (GlcNAc...) asparagine glycan is linked to Asn110. Residues 115-206 (GSHTIQLMFG…ENGKETLQRT (92 aa)) are alpha-2. 2 disulfide bridges follow: Cys125-Cys188 and Cys227-Cys283. Residues 207-298 (DPPKTHMTHH…GLPKPLTLRW (92 aa)) form an alpha-3 region. The Ig-like C1-type domain maps to 209–295 (PKTHMTHHPI…QHEGLPKPLT (87 aa)). The segment at 299 to 308 (EPSSQPTIPI) is connecting peptide. The chain crosses the membrane as a helical span at residues 309–332 (VGIIAGLVLLGAVITGAVVAAVMW). The Cytoplasmic portion of the chain corresponds to 333 to 365 (RRKSSDRKGGSYSQAASSDSAQGSDVSLTACKV). The segment at 338–365 (DRKGGSYSQAASSDSAQGSDVSLTACKV) is disordered. Positions 342 to 359 (GSYSQAASSDSAQGSDVS) are enriched in low complexity. Residue Ser343 is modified to Phosphoserine. Tyr344 is subject to Phosphotyrosine. Residues Ser345, Ser349, Ser352, Ser356, and Ser359 each carry the phosphoserine modification.

Belongs to the MHC class I family. As to quaternary structure, heterodimer of an alpha chain and a beta chain (beta-2-microglobulin).

It is found in the membrane. Its function is as follows. Involved in the presentation of foreign antigens to the immune system. The protein is Patr class I histocompatibility antigen, A-126 alpha chain (Patr-A) of Pan troglodytes (Chimpanzee).